The following is a 1307-amino-acid chain: Rho1 guanine nucleotide exchange factor TUS1 (1307 aa).

Residues 1–10 show a composition bias toward polar residues; sequence MYRYNRSSPF. 3 disordered regions span residues 1–144, 164–194, and 219–239; these read MYRY…FIGN, PFAN…SDLR, and EDSE…NVSG. A compositionally biased stretch (basic and acidic residues) spans 12–29; that stretch reads RTPEKRVSRQESQRKSIE. The span at 37–79 shows a compositional bias: polar residues; the sequence is NTRNSFLDDSDNGTDNISIGWTPISDTQQFQSPVPQAFTFTSK. Residues 87–97 are compositionally biased toward low complexity; that stretch reads TSSSESTPKST. Residues 176 to 194 are compositionally biased toward basic and acidic residues; sequence SPRDSSKQQAHFSDESDLR. The DH domain occupies 467-657; it reads QRQSFIFDLI…EKLNFEVNQV (191 aa). In terms of domain architecture, PH spans 715–877; the sequence is KLVLSGTVYK…WIDAIMESFK (163 aa). The tract at residues 780–802 is disordered; sequence TSKQPLRNYSQKEHKSPMHNFST. Positions 938-1279 constitute a CNH domain; it reads TTRILCCEDV…KLASSERREK (342 aa).

In terms of assembly, interacts with RHO1.

In terms of biological role, guanine nucleotide-exchange factor (GEF) for RHO1 that stimulates the exchange of RHO1 GDP-bound form into GTP-bound form. Required for signaling of cell wall defects to RHO1. This Saccharomyces cerevisiae (strain ATCC 204508 / S288c) (Baker's yeast) protein is Rho1 guanine nucleotide exchange factor TUS1 (TUS1).